The sequence spans 634 residues: MSDSFYRYDVIVIGGGHAGTEAALASARTGARTLLLTHNIETVGAMSCNPAIGGIGKGHLVKEIDGLGGAMARAADLAGIQWRTLNASKGPAVRATRCQADRNLYRTAIRCIVEAQPNLTVFQAAVDDLIIHNGTSEADSVRGVITQTGLRFQAPSVVLTAGTFLAGKIHVGETQYAAGRMGDPPATTLAARLRERPFAIDRLKTGTPPRIDGRTLDYGVMAEQPGDDPLPVMSFMGQVSDHPRQVSCWITQTTEQTHEIIRNALHRSPLYSGQIEGIGPRYCPSIEDKVVRFAEKTSHQIFVEPEGLEVAEIYPNGISTSLPFDVQLALVRSIHGFANAHITRPGYAIEYDFFDPRGLKASLETKAVGGLFFAGQINGTTGYEEAAAQGLLAGLNAARHVQGLPAWSPRRDEAYLGVLVDDLITHGTTEPYRMFTSRAEYRLQLREDNADARLTGVGRAMGLVDDARWARFAAKQEAVQRETTRLSALWATPGNALGREVAGALGVTVSRETNVLDLIKRPELTYATLMRVPTLGPGVDDAQVAEQVEISVKYAGYLDRQRDDIARQQRHETTPIPEGFDYASVRGLSIEVQQKLERVRPQHIGQAQRIPGMTPAAISLLLVHLERARRSQVA.

14-19 (GGGHAG) contributes to the FAD binding site. 279-293 (GPRYCPSIEDKVVRF) contacts NAD(+).

The protein belongs to the MnmG family. As to quaternary structure, homodimer. Heterotetramer of two MnmE and two MnmG subunits. FAD serves as cofactor.

The protein resides in the cytoplasm. NAD-binding protein involved in the addition of a carboxymethylaminomethyl (cmnm) group at the wobble position (U34) of certain tRNAs, forming tRNA-cmnm(5)s(2)U34. The sequence is that of tRNA uridine 5-carboxymethylaminomethyl modification enzyme MnmG from Xanthomonas euvesicatoria pv. vesicatoria (strain 85-10) (Xanthomonas campestris pv. vesicatoria).